The sequence spans 556 residues: (S)-N-methylcanadine 1-hydroxylase CYP82Y1 (556 aa).

Residues 18-38 (TAVGTLILAFLLTLSPVIIYY) traverse the membrane as a helical segment. Residue Cys500 participates in heme binding.

It belongs to the cytochrome P450 family. Requires heme as cofactor. In terms of tissue distribution, highly expressed in capsules. Expressed is stems.

It is found in the membrane. The catalysed reaction is (S)-cis-N-methylcanadine + reduced [NADPH--hemoprotein reductase] + O2 = (S)-1-hydroxy-N-methylcanadine + oxidized [NADPH--hemoprotein reductase] + H2O + H(+). Its pathway is alkaloid biosynthesis. Cytochrome P450 involved in the biosynthesis of the benzylisoquinoline alkaloid noscapine. Converts (S)-N-methylcanadine to (S)-1-hydroxy-N-methylcanadine. In Papaver somniferum (Opium poppy), this protein is (S)-N-methylcanadine 1-hydroxylase CYP82Y1.